Here is a 426-residue protein sequence, read N- to C-terminus: D-tagatose-1,6-bisphosphate aldolase subunit KbaZ (426 aa).

This sequence belongs to the GatZ/KbaZ family. KbaZ subfamily. As to quaternary structure, forms a complex with KbaY.

Its pathway is carbohydrate metabolism; D-tagatose 6-phosphate degradation; D-glyceraldehyde 3-phosphate and glycerone phosphate from D-tagatose 6-phosphate: step 2/2. Functionally, component of the tagatose-1,6-bisphosphate aldolase KbaYZ that is required for full activity and stability of the Y subunit. Could have a chaperone-like function for the proper and stable folding of KbaY. When expressed alone, KbaZ does not show any aldolase activity. The chain is D-tagatose-1,6-bisphosphate aldolase subunit KbaZ from Escherichia coli O17:K52:H18 (strain UMN026 / ExPEC).